Consider the following 317-residue polypeptide: MDKLTAMATFVKVVDAGSFTRAADALGLPKARVSQRVSDLEKHLGVRLLNRTTRALSLTHDGSAYFDKCQVLLQQIDELEATLRGGTATPIGRLRVDSLITIARWVIAPRLHDFQARYPRIQLRLSSSDRISNLLEDGIDCTIRGGALKDSSMIARHLCDIQMGLYASPEYLASIGGVDSPNDLSQFRRLSWFSGRERNPFMWELESGPERFVVQSGDGMQFDEPDVAISACMAGSGICPGAPFAVAGFVRAGKLVPVLPQWHFSAAPVHVIYPGSRHLSVRVRCFVNWVMELFAENPEIQLTPIALALESGLAQRT.

The HTH lysR-type domain occupies 1–59 (MDKLTAMATFVKVVDAGSFTRAADALGLPKARVSQRVSDLEKHLGVRLLNRTTRALSLT). The H-T-H motif DNA-binding region spans 19–38 (FTRAADALGLPKARVSQRVS).

This sequence belongs to the LysR transcriptional regulatory family.

Represses the transcription of the operon that consists of PA14_22510 to PA14_22540. The chain is HTH-type transcriptional repressor PA14_22550 from Pseudomonas aeruginosa (strain UCBPP-PA14).